The chain runs to 1359 residues: Transcriptional regulator ATRX homolog (1359 aa).

The tract at residues 1 to 402 is disordered; the sequence is MRVGVSESED…RAEKERRKRL (402 aa). The segment covering 11–49 has biased composition (basic and acidic residues); it reads SDGHVIEDEDLEMARQIENERKEKRAQKLKEKREREGKP. The segment covering 50-61 has biased composition (basic residues); sequence PPKKRPAKKRKA. Acidic residues predominate over residues 64 to 73; it reads SEEDDDDEEE. 6 stretches are compositionally biased toward basic residues: residues 77 to 86, 103 to 123, 139 to 149, 165 to 177, 194 to 204, and 219 to 229; these read KSSKKSRKRA, KSKSKKKVDQKKKEKSKKKRT, KSKKKSKKTKK, VKKSKKNKEKSVK, KKSKKGLKKKA, and KKSKKKSKKVV. The span at 257 to 271 shows a compositional bias: acidic residues; sequence ESSESEKSDEEEEEK. Over residues 321–336 the composition is skewed to basic and acidic residues; that stretch reads KDQKSESEASDVEEKV. Over residues 347–357 the composition is skewed to low complexity; the sequence is SESGSDSSEGS. A compositionally biased stretch (basic residues) spans 362 to 376; that stretch reads RKSKKKEKPEKKKKG. The span at 383–397 shows a compositional bias: basic and acidic residues; sequence KLQKETIDAERAEKE. A Helicase ATP-binding domain is found at 483–685; sequence DRLDTEGSGG…HCMVNFVKPG (203 aa). ATP is bound at residue 496–503; sequence HCMGLGKT. A DEAH box motif is present at residues 636–639; sequence DEAH. The tract at residues 809–891 is disordered; the sequence is RVMREDAEEE…NSDDEDEEDG (83 aa). The segment covering 814 to 832 has biased composition (acidic residues); it reads DAEEEADFIDDGDGSESES. Positions 833 to 847 are enriched in low complexity; sequence EGSFKSGSESDSGKS. One can recognise a Helicase C-terminal domain in the interval 951–1134; that stretch reads LLVEIIKKCE…EAQIQRHYLG (184 aa).

Belongs to the SNF2/RAD54 helicase family.

It is found in the nucleus. It carries out the reaction ATP + H2O = ADP + phosphate + H(+). Required for embryonic development and gonadogenesis. Also, functions redundantly with the transcriptional repressor lin-35 to regulate somatic gonad development. This chain is Transcriptional regulator ATRX homolog, found in Caenorhabditis elegans.